The following is a 427-amino-acid chain: Protein TIFY 6a (427 aa).

Positions 1–25 (MERDFLGAIGRKEEAAGKPEEHSDY) are enriched in basic and acidic residues. Positions 1–33 (MERDFLGAIGRKEEAAGKPEEHSDYRGGGGGAS) are disordered. Residues 196-231 (QNPKVTQMTIFYDGLVNVFDNIPVEKAQELMLLASR) enclose the Tify domain. Composition is skewed to polar residues over residues 293 to 303 (LPKSSSSSNDS) and 317 to 327 (PLSQASPSQPI). Residues 293-327 (LPKSSSSSNDSAGPKSGGLPLAVTPLSQASPSQPI) are disordered. The short motif at 343–367 (PQARKASLARFLEKRKERVSSVAPY) is the Jas element. Positions 345–352 (ARKASLAR) match the Nuclear localization signal motif. Residues 360–427 (RVSSVAPYPS…QEPPSTKLQI (68 aa)) are disordered. Polar residues-rich tracts occupy residues 369-402 (SSKSPLESSDTIGSPSTPSKSSCTDITPSTNNCE) and 411-427 (RNISFSSQEPPSTKLQI).

This sequence belongs to the TIFY/JAZ family. Ubiquitinated.

The protein resides in the nucleus. Repressor of jasmonate responses. The protein is Protein TIFY 6a of Oryza sativa subsp. indica (Rice).